A 190-amino-acid polypeptide reads, in one-letter code: Potassium-transporting ATPase KdpC subunit (190 aa).

A helical membrane pass occupies residues threonine 10–glycine 30.

It belongs to the KdpC family. In terms of assembly, the system is composed of three essential subunits: KdpA, KdpB and KdpC.

It localises to the cell inner membrane. Functionally, part of the high-affinity ATP-driven potassium transport (or Kdp) system, which catalyzes the hydrolysis of ATP coupled with the electrogenic transport of potassium into the cytoplasm. This subunit acts as a catalytic chaperone that increases the ATP-binding affinity of the ATP-hydrolyzing subunit KdpB by the formation of a transient KdpB/KdpC/ATP ternary complex. The chain is Potassium-transporting ATPase KdpC subunit from Escherichia coli O81 (strain ED1a).